A 538-amino-acid polypeptide reads, in one-letter code: MADPQATNGTGAACAERDASDVGDVSDVGDARDEGAGRVVAVRGAVVDVAFDGGALPALNEALTIPVDGASPILAEVHAHLSDAAVRALALGPTGGLRRGAAVRATGGPIRVPVGDAVLGRLLSVTGAPGDDGAALAADVERRPIHRGAPPLAEQKSANALFATGIKVIDLLAPLAQGGKAAMFGGAGVGKTVLVMELIHAMVERYRGISVFAGIGERSREGHEMLLDMRGSGVLGRTVLVYGQMNEPPGARWRVPLTALAIAEYFRDERAQNVLLLMDNVFRFVQAGAEVSGLLGRLPSRVGYQPTLASEVAALQERIASVEGAAVTAIEAVYVPADDFTDPAVTAIAAHVDSMVVLSRAMAAEGMYPAIDPVASSSILLDPLVVGEAHVEVAIEVRRVIEHYRELQDVIALLGIDELGADDRRLVGRARRLQRFLTQPFAVTEAFTGQAGASVEIADTIAGCRAILRGDCDDWRESSLYMVGTLDDARRKEAAAREADARREAAAAASVAGPGTTSGTTSDPASGSAEPQGARHGR.

Residues methionine 1–threonine 10 show a composition bias toward polar residues. The segment at methionine 1–aspartate 30 is disordered. Glycine 185–threonine 192 is a binding site for ATP. A compositionally biased stretch (basic and acidic residues) spans alanine 494–alanine 505. The tract at residues alanine 494 to arginine 538 is disordered. The segment covering alanine 506–alanine 529 has biased composition (low complexity).

Belongs to the ATPase alpha/beta chains family. As to quaternary structure, F-type ATPases have 2 components, CF(1) - the catalytic core - and CF(0) - the membrane proton channel. CF(1) has five subunits: alpha(3), beta(3), gamma(1), delta(1), epsilon(1). CF(0) has three main subunits: a(1), b(2) and c(9-12). The alpha and beta chains form an alternating ring which encloses part of the gamma chain. CF(1) is attached to CF(0) by a central stalk formed by the gamma and epsilon chains, while a peripheral stalk is formed by the delta and b chains.

The protein localises to the cell inner membrane. It carries out the reaction ATP + H2O + 4 H(+)(in) = ADP + phosphate + 5 H(+)(out). Produces ATP from ADP in the presence of a proton gradient across the membrane. The catalytic sites are hosted primarily by the beta subunits. This Burkholderia pseudomallei (strain K96243) protein is ATP synthase subunit beta 2.